A 319-amino-acid polypeptide reads, in one-letter code: tRNA uridine(34) hydroxylase (319 aa).

Residues 127–221 (KQEDTVIIDA…YGKDPEVQGE (95 aa)) form the Rhodanese domain. The Cysteine persulfide intermediate role is filled by Cys-181.

This sequence belongs to the TrhO family.

It carries out the reaction uridine(34) in tRNA + AH2 + O2 = 5-hydroxyuridine(34) in tRNA + A + H2O. In terms of biological role, catalyzes oxygen-dependent 5-hydroxyuridine (ho5U) modification at position 34 in tRNAs. The polypeptide is tRNA uridine(34) hydroxylase (Bacillus cereus (strain ZK / E33L)).